A 218-amino-acid polypeptide reads, in one-letter code: Glutathione S-transferase Mu 2 (218 aa).

A GST N-terminal domain is found at 2 to 88 (PIILGYWNIR…YIARKHNLCG (87 aa)). 7-8 (YW) contributes to the glutathione binding site. Phosphoserine is present on residues S27 and S44. Glutathione-binding positions include 43–46 (RSQW), K50, 59–60 (NL), and 72–73 (QS). Residues 90 to 208 (TEKEKIQEDI…KSSRFLPRPV (119 aa)) enclose the GST C-terminal domain. Y116 is a binding site for substrate.

The protein belongs to the GST superfamily. Mu family. Homodimer.

The protein resides in the cytoplasm. The enzyme catalyses RX + glutathione = an S-substituted glutathione + a halide anion + H(+). It catalyses the reaction 11(S)-hydroxy-14(S),15(S)-epoxy-(5Z,8Z,12E)-eicosatrienoate + glutathione = (11S,15S)-dihydroxy-14(R)-S-glutathionyl-(5Z,8Z,12E)-eicosatrienoate. Its function is as follows. Conjugation of reduced glutathione to a wide number of exogenous and endogenous hydrophobic electrophiles. Participates in the formation of novel hepoxilin regioisomers. The chain is Glutathione S-transferase Mu 2 (GSTM2) from Pongo abelii (Sumatran orangutan).